The primary structure comprises 558 residues: INCREASED PETAL GROWTH ANISOTROPY 1-like protein 2 (558 aa).

Low complexity predominate over residues 1–15; sequence MSRISTTSTTPSRVR. The tract at residues 1-54 is disordered; that stretch reads MSRISTTSTTPSRVRAANSHYSVISKPRAQDDNGLTGGKPKSSGYDVKNDPAKR. Positions 104 to 180 form a coiled coil; the sequence is VMATAAAEDE…EAKISSLSSN (77 aa). The segment at 207–285 is disordered; that stretch reads KVKKEVAVES…AARAQKSPPV (79 aa). Composition is skewed to pro residues over residues 221-236 and 256-272; these read PPSP…PPLP and FAPP…PPRP. The stretch at 392–448 forms a coiled coil; it reads KADTLQEAAVEYRELKKLEKELSSYSDDPNIHYGVALKKMANLLDKSEQRIRRLVRL.

Belongs to the IPGA1 family.

Its subcellular location is the cytoplasm. The protein localises to the cytoskeleton. In terms of biological role, microtubule-associated protein probably involved in the regulation of microtubule organization. The protein is INCREASED PETAL GROWTH ANISOTROPY 1-like protein 2 of Arabidopsis thaliana (Mouse-ear cress).